The following is a 387-amino-acid chain: Pepsin II-1 (387 aa).

An N-terminal signal peptide occupies residues Met-1–Cys-15. A propeptide spans Ile-16 to Phe-59 (activation peptide). The Peptidase A1 domain occupies Tyr-75 to Ala-384. Asp-93 is an active-site residue. A disulfide bond links Cys-106 and Cys-111. Ser-129 is modified (phosphoserine). A disulfide bridge connects residues Cys-267 and Cys-271. Asp-276 is an active-site residue. The cysteines at positions 310 and 343 are disulfide-linked.

Belongs to the peptidase A1 family.

It localises to the secreted. The catalysed reaction is Preferential cleavage: hydrophobic, preferably aromatic, residues in P1 and P1' positions. Cleaves 1-Phe-|-Val-2, 4-Gln-|-His-5, 13-Glu-|-Ala-14, 14-Ala-|-Leu-15, 15-Leu-|-Tyr-16, 16-Tyr-|-Leu-17, 23-Gly-|-Phe-24, 24-Phe-|-Phe-25 and 25-Phe-|-Tyr-26 bonds in the B chain of insulin.. Functionally, shows particularly broad specificity; although bonds involving phenylalanine and leucine are preferred, many others are also cleaved to some extent. This Oryctolagus cuniculus (Rabbit) protein is Pepsin II-1.